A 596-amino-acid polypeptide reads, in one-letter code: Chaperonin 60 subunit beta 2, chloroplastic (596 aa).

A chloroplast-targeting transit peptide spans 1-50 (MASTFTATSSLGSLLAPNAIKLSSATSISSSSFGRRHNVCVRRSRPAIVC). Serine 97 and serine 474 each carry phosphoserine. A coiled-coil region spans residues 388–489 (TQEAVNKRVV…KDTLENDEEK (102 aa)).

The protein belongs to the chaperonin (HSP60) family. Part of the Cpn60 complex composed of 7 alpha and 7 beta subunits. Can also form a complex composed of 14 beta subunits only. Both complexes show ATPase activity. The Cpn60 complex interacts with the Cpn10 complex. Interacts with RAB during heat stress.

It localises to the plastid. The protein localises to the chloroplast stroma. Functionally, involved in protein assisted folding. The chain is Chaperonin 60 subunit beta 2, chloroplastic (CPN60B2) from Arabidopsis thaliana (Mouse-ear cress).